The primary structure comprises 520 residues: L-cysteine:1D-myo-inositol 2-amino-2-deoxy-alpha-D-glucopyranoside ligase (520 aa).

Residue C48 participates in Zn(2+) binding. Residues 48-51 (CGIT), T63, and 86-88 (NVT) each bind L-cysteinyl-5'-AMP. The 'HIGH' region signature appears at 50 to 60 (ITPYDSTHLGH). The 'ERGGDP' region signature appears at 192–197 (ERGGDP). Position 232 (W232) interacts with L-cysteinyl-5'-AMP. C236 serves as a coordination point for Zn(2+). 254-256 (GED) lines the L-cysteinyl-5'-AMP pocket. H261 contributes to the Zn(2+) binding site. I288 contributes to the L-cysteinyl-5'-AMP binding site. The short motif at 294–298 (KMSKS) is the 'KMSKS' region element.

Belongs to the class-I aminoacyl-tRNA synthetase family. MshC subfamily. In terms of assembly, monomer. It depends on Zn(2+) as a cofactor.

It catalyses the reaction 1D-myo-inositol 2-amino-2-deoxy-alpha-D-glucopyranoside + L-cysteine + ATP = 1D-myo-inositol 2-(L-cysteinylamino)-2-deoxy-alpha-D-glucopyranoside + AMP + diphosphate + H(+). Its function is as follows. Catalyzes the ATP-dependent condensation of GlcN-Ins and L-cysteine to form L-Cys-GlcN-Ins. The sequence is that of L-cysteine:1D-myo-inositol 2-amino-2-deoxy-alpha-D-glucopyranoside ligase from Corynebacterium kroppenstedtii (strain DSM 44385 / JCM 11950 / CIP 105744 / CCUG 35717).